A 150-amino-acid polypeptide reads, in one-letter code: C-C motif chemokine 25 (150 aa).

The N-terminal stretch at Met1 to Thr23 is a signal peptide. 2 cysteine pairs are disulfide-bonded: Cys30–Cys58 and Cys31–Cys75.

This sequence belongs to the intercrine beta (chemokine CC) family. As to expression, specifically expressed by thymic dendritic cells. High levels in thymus and small intestine.

The protein resides in the secreted. Functionally, potentially involved in T-cell development. Recombinant protein shows chemotactic activity on thymocytes, macrophages, THP-1 cells, and dendritics cells but is inactive on peripheral blood lymphocytes and neutrophils. Binds to CCR9. Isoform 2 is an antagonist of isoform 1. Binds to atypical chemokine receptor ACKR4 and mediates the recruitment of beta-arrestin (ARRB1/2) to ACKR4. In Homo sapiens (Human), this protein is C-C motif chemokine 25 (CCL25).